The sequence spans 329 residues: Beta-ketoacyl-[acyl-carrier-protein] synthase III (329 aa).

Active-site residues include Cys-123 and His-256. The interval 257–261 (QANIR) is ACP-binding. Asn-286 is an active-site residue.

It belongs to the thiolase-like superfamily. FabH family. Homodimer.

It localises to the cytoplasm. It catalyses the reaction malonyl-[ACP] + acetyl-CoA + H(+) = 3-oxobutanoyl-[ACP] + CO2 + CoA. It functions in the pathway lipid metabolism; fatty acid biosynthesis. Its function is as follows. Catalyzes the condensation reaction of fatty acid synthesis by the addition to an acyl acceptor of two carbons from malonyl-ACP. Catalyzes the first condensation reaction which initiates fatty acid synthesis and may therefore play a role in governing the total rate of fatty acid production. Possesses both acetoacetyl-ACP synthase and acetyl transacylase activities. Its substrate specificity determines the biosynthesis of branched-chain and/or straight-chain of fatty acids. The chain is Beta-ketoacyl-[acyl-carrier-protein] synthase III from Burkholderia orbicola (strain AU 1054).